The sequence spans 183 residues: NEDD8-conjugating enzyme Ubc12 (183 aa).

At Met-1 the chain carries N-acetylmethionine. Residues 1–28 (MIKLFSLKQQKKEEESAGGTKGSSKKAS) are disordered. One can recognise a UBC core domain in the interval 29 to 173 (AAQLRIQKDI…VQRSMRGGYI (145 aa)). Cys-111 serves as the catalytic Glycyl thioester intermediate.

Belongs to the ubiquitin-conjugating enzyme family. UBC12 subfamily. In terms of processing, the acetylation of Met-1 increases affinity for DCUN1D1 by about 2 orders of magnitude and is crucial for NEDD8 transfer to cullins.

It catalyses the reaction [E1 NEDD8-activating enzyme]-S-[NEDD8 protein]-yl-L-cysteine + [E2 NEDD8-conjugating enzyme]-L-cysteine = [E1 NEDD8-activating enzyme]-L-cysteine + [E2 NEDD8-conjugating enzyme]-S-[NEDD8-protein]-yl-L-cysteine.. It participates in protein modification; protein neddylation. In terms of biological role, accepts the ubiquitin-like protein NEDD8 from the UBA3-NAE1 E1 complex and catalyzes its covalent attachment to other proteins. The specific interaction with the E3 ubiquitin ligase rbx1, but not rbx2, suggests that the rbx1-ube2m complex neddylates specific target proteins, such as cul1, cul2, cul3 and cul4. Involved in cell proliferation. The sequence is that of NEDD8-conjugating enzyme Ubc12 (ube2m) from Xenopus laevis (African clawed frog).